The sequence spans 169 residues: Small ribosomal subunit protein uS5 (169 aa).

The region spanning 13 to 76 is the S5 DRBM domain; the sequence is LVEKLVSVRR…EKARRNMKDV (64 aa).

It belongs to the universal ribosomal protein uS5 family. As to quaternary structure, part of the 30S ribosomal subunit. Contacts proteins S4 and S8.

With S4 and S12 plays an important role in translational accuracy. Its function is as follows. Located at the back of the 30S subunit body where it stabilizes the conformation of the head with respect to the body. This chain is Small ribosomal subunit protein uS5, found in Hydrogenovibrio crunogenus (strain DSM 25203 / XCL-2) (Thiomicrospira crunogena).